The sequence spans 93 residues: U11-ctenitoxin-Pn1a (93 aa).

The first 21 residues, 1–21 (MKCAVLFLSVIALVHIFVVEA), serve as a signal peptide directing secretion. Positions 22–34 (EEEPDSDALVPQE) are excised as a propeptide. Intrachain disulfides connect cysteine 37-cysteine 51, cysteine 44-cysteine 57, cysteine 50-cysteine 75, cysteine 59-cysteine 73, and cysteine 83-cysteine 90.

It belongs to the neurotoxin 09 (Tx3-6) family. Expressed by the venom gland.

It localises to the secreted. Functionally, probable neurotoxin. The polypeptide is U11-ctenitoxin-Pn1a (Phoneutria nigriventer (Brazilian armed spider)).